The chain runs to 504 residues: Potassium voltage-gated channel subfamily V member 1 (504 aa).

2 disordered regions span residues 1–22 (MDLSPRNRPLLESSSLDSGGSL) and 172–193 (KKDTDDQESQHESEQDFSQGPC). Over 1-214 (MDLSPRNRPL…EKPGSSTAAR (214 aa)) the chain is Cytoplasmic. A compositionally biased stretch (low complexity) spans 10-22 (LLESSSLDSGGSL). The span at 172 to 185 (KKDTDDQESQHESE) shows a compositional bias: basic and acidic residues. Residues 215–235 (IFGVISIIFVAVSIVNMALMS) traverse the membrane as a helical segment. Residues 236–242 (AELSWLN) lie on the Extracellular side of the membrane. Residues 243-263 (LQLLEILEYVCISWFTGEFIL) traverse the membrane as a helical segment. Topologically, residues 264–280 (RFLCVKDRCRFLRKVPN) are cytoplasmic. Residues 281-301 (IIDLLAILPFYITLLVESLSG) traverse the membrane as a helical segment. At 302-313 (SHTTQELENVGR) the chain is on the extracellular side. Residues 314–335 (LVQVLRLLRALRMLKLGRHSTG) form a helical; Voltage-sensor membrane-spanning segment. Residues 336-349 (LRSLGMTITQCYEE) are Cytoplasmic-facing. Residues 350–370 (VGLLLLFLSVGISIFSTIEYF) form a helical membrane-spanning segment. The short motif at 396–401 (TVGYGD) is the Selectivity filter element. Residues 411-431 (IVAFMCILSGILVLALPIAII) traverse the membrane as a helical segment. The Cytoplasmic segment spans residues 432 to 504 (NDRFSACYFT…RSSGGDDFWF (73 aa)).

This sequence belongs to the potassium channel family. V (TC 1.A.1.2) subfamily. Kv8.1/KCNV1 sub-subfamily. Heteromultimer with KCNB1 and KCNB2. Interacts with KCNC4 and KCND1. As to expression, detected in brain, throughout layers II, IV and VI of the brain cortex. Detected in cerebellum and hippocampus, in the granule cell layer, Purkinje cell layer, pyramidal cell layer and dentate gyrus. Detected at lower levels in olfactory bulb, amygdala, thalamus, hypothalamus, midbrain and brainstem.

The protein resides in the cell membrane. Functionally, potassium channel subunit that does not form functional channels by itself. Modulates KCNB1 and KCNB2 channel activity by shifting the threshold for inactivation to more negative values and by slowing the rate of inactivation. Can down-regulate the channel activity of KCNB1, KCNB2, KCNC4 and KCND1, possibly by trapping them in intracellular membranes. This Mesocricetus auratus (Golden hamster) protein is Potassium voltage-gated channel subfamily V member 1 (KCNV1).